Reading from the N-terminus, the 204-residue chain is SOSS complex subunit B homolog (204 aa).

Positions 24 to 94 (IVLEVGVATV…TLYSGKNGEV (71 aa)) form a DNA-binding region, OB. The disordered stretch occupies residues 115 to 204 (RAEQQAVANP…GRGGLKGERR (90 aa)). 2 stretches are compositionally biased toward low complexity: residues 122–131 (ANPAATPAGL) and 139–183 (GLPA…QTTT). Residues 187 to 198 (TRGGRGGGGRGG) are compositionally biased toward gly residues.

Belongs to the SOSS-B family.

The protein is SOSS complex subunit B homolog of Drosophila melanogaster (Fruit fly).